A 1502-amino-acid polypeptide reads, in one-letter code: G patch domain-containing protein 8 (1502 aa).

Residues 40–86 (SDNIGHRLLQKHGWKLGQGLGKSLQGRTDPIPIVVKYDVMGMGRMEM) form the G-patch domain. Residues 89–124 (DYAEDATERRRVLEVEKEDTEELRQKYKDYVDKEKA) adopt a coiled-coil conformation. The C2H2-type zinc-finger motif lies at 136 to 160 (FYCELCDKQYQKHQEFDNHINSYDH). The disordered stretch occupies residues 172 to 251 (REFARNVSSR…GATASCGLGS (80 aa)). Positions 182 to 206 (SRKDEKKQEKALRRLHELAEQRKQA) are enriched in basic and acidic residues. Residues 223–233 (VDEEGGEDDKD) are compositionally biased toward acidic residues. Lysine 311 participates in a covalent cross-link: Glycyl lysine isopeptide (Lys-Gly) (interchain with G-Cter in SUMO2). 2 stretches are compositionally biased toward basic and acidic residues: residues 323–339 (AEEG…EKSS) and 424–436 (NTTH…ESKK). Disordered regions lie at residues 323–391 (AEEG…ATEP) and 419–541 (QMDG…FPVL). A compositionally biased stretch (polar residues) spans 459–472 (SEVSEQPKETSMTE). N6-acetyllysine is present on lysine 479. At serine 491 the chain carries Phosphoserine. Residues 491–519 (SDQSLESHSQKVSETQMCESNSSKETSLA) show a composition bias toward polar residues. Residue lysine 577 forms a Glycyl lysine isopeptide (Lys-Gly) (interchain with G-Cter in SUMO2) linkage. 2 stretches are compositionally biased toward basic and acidic residues: residues 579–623 (SRNK…EKIV) and 653–670 (SETE…ERSG). A disordered region spans residues 579–1301 (SRNKDARTKG…ESTDGAEDAS (723 aa)). Serine 653 carries the phosphoserine modification. A compositionally biased stretch (basic residues) spans 671 to 692 (KSHRHKKKKKHKKSSKHKRKHK). Residues 693–707 (ADTEEKSSKAESGEK) show a composition bias toward basic and acidic residues. Residues 708 to 720 (SKKRKKRKRKKNK) are compositionally biased toward basic residues. Positions 733 to 743 (PEPPGSGSPAP) are enriched in pro residues. Phosphoserine is present on residues serine 738, serine 740, and serine 758. The segment covering 750–772 (AQDDSQRRSLPAEEGSSGKKDEG) has biased composition (basic and acidic residues). Basic residues-rich tracts occupy residues 799-809 (AGTKRSSRSSH) and 852-867 (SRSR…RSSR). Residues 868–896 (RSYSSSSDASSDQSCYSRQRSYSDDSYSD) show a composition bias toward low complexity. Phosphoserine is present on residues serine 911 and serine 914. A compositionally biased stretch (basic residues) spans 919–928 (SKHRSKRHKY). Residues serine 981, serine 1009, serine 1014, serine 1033, and serine 1035 each carry the phosphoserine modification. The segment covering 1010-1027 (WGHESPEERHSGRRDFIR) has biased composition (basic and acidic residues). Over residues 1042–1059 (GRGEGPGKKDDGRGDDSK) the composition is skewed to basic and acidic residues. Serine 1081 carries the post-translational modification Phosphoserine. 2 stretches are compositionally biased toward basic and acidic residues: residues 1093 to 1108 (LLEK…KPSV) and 1159 to 1171 (KKCE…RGEE). Residue lysine 1105 forms a Glycyl lysine isopeptide (Lys-Gly) (interchain with G-Cter in SUMO2) linkage. Serine 1107 is subject to Phosphoserine. Serine 1175 carries the phosphoserine modification.

This Homo sapiens (Human) protein is G patch domain-containing protein 8 (GPATCH8).